We begin with the raw amino-acid sequence, 122 residues long: Small ribosomal subunit protein uS13 (122 aa).

The interval 94–122 (SLPVRGQRTKTNARTRKVHVSRSKNSRGK) is disordered.

The protein belongs to the universal ribosomal protein uS13 family. As to quaternary structure, part of the 30S ribosomal subunit. Forms a loose heterodimer with protein S19. Forms two bridges to the 50S subunit in the 70S ribosome.

Functionally, located at the top of the head of the 30S subunit, it contacts several helices of the 16S rRNA. In the 70S ribosome it contacts the 23S rRNA (bridge B1a) and protein L5 of the 50S subunit (bridge B1b), connecting the 2 subunits; these bridges are implicated in subunit movement. Contacts the tRNAs in the A and P-sites. This Haemophilus influenzae (strain ATCC 51907 / DSM 11121 / KW20 / Rd) protein is Small ribosomal subunit protein uS13.